The primary structure comprises 412 residues: Palmitoyltransferase ZDHHC11 (412 aa).

Over 1–42 the chain is Cytoplasmic; that stretch reads MDTRSGSQCSVTPEAILNNEKLVLPPRISRVNGWSLPLHYFQ. The helical transmembrane segment at 43–63 threads the bilayer; the sequence is VVTWAVFVGLSSATFGIFIPF. Topologically, residues 64-69 are lumenal; sequence LPHAWK. Residues 70 to 90 traverse the membrane as a helical segment; sequence YIAYVVTGGIFSFHLVVHLIA. At 91-176 the chain is on the cytoplasmic side; that stretch reads SCIDPADSNV…YWFFFSTVAS (86 aa). The 51-residue stretch at 125–175 folds into the DHHC domain; the sequence is QFCHLCKVTVNKKTKHCISCNKCVSGFDHHCKWINNCVGSRNYWFFFSTVA. C155 acts as the S-palmitoyl cysteine intermediate in catalysis. Residues 177 to 197 traverse the membrane as a helical segment; it reads ATAGMLCLIAILLYVLVQYLV. Residues 198–230 lie on the Lumenal side of the membrane; sequence NPGVLRTDPRYEDVKNMNTWLLFLPLFPVQVQT. The segment at 198–412 is mediates interaction with IRF3 and STING1; it reads NPGVLRTDPR…MKTDSAESED (215 aa). The helical transmembrane segment at 231 to 251 threads the bilayer; the sequence is LIVVIIGMLVLLLDFLGLVHL. Over 252–412 the chain is Cytoplasmic; the sequence is GQLLIFHIYL…MKTDSAESED (161 aa). The interval 374-412 is disordered; that stretch reads HPDGGSMAQEADDAPSISTLGLQQETTEPMKTDSAESED. A compositionally biased stretch (polar residues) spans 389–400; sequence SISTLGLQQETT. Residues 401–412 are compositionally biased toward basic and acidic residues; that stretch reads EPMKTDSAESED.

This sequence belongs to the DHHC palmitoyltransferase family. Interacts with IRF3 and STING1; in presence of DNA viruses recruits IRF3 to STING1 promoting IRF3 phosphorylation and activation. In terms of tissue distribution, expressed in testis.

It is found in the endoplasmic reticulum membrane. It carries out the reaction L-cysteinyl-[protein] + hexadecanoyl-CoA = S-hexadecanoyl-L-cysteinyl-[protein] + CoA. Functionally, endoplasmic reticulum-localized palmitoyltransferase that could catalyze the addition of palmitate onto various protein substrates and be involved in a variety of cellular processes. Has a palmitoyltransferase activity toward NCDN and regulates NCDN association with endosome membranes through this palmitoylation. May play a role in cell proliferation. Also has a palmitoyltransferase activity-independent function in DNA virus-triggered and CGAS-mediated innate immune response. Functions as an adapter that recruits IRF3 to STING1 to promote the activation of that key transcriptional regulator of type I interferon (IFN)-dependent immune response. The protein is Palmitoyltransferase ZDHHC11 of Homo sapiens (Human).